A 953-amino-acid polypeptide reads, in one-letter code: TPR repeat-containing protein ZIP4 (953 aa).

A TPR 1 repeat occupies 129–162 (ASFFHRSGLAWLDLGRVDLASACFEKATPLVSAA). Positions 248 to 269 (AASPSSSSPRTPPYGGATPKTP) are disordered. 2 TPR repeats span residues 432 to 465 (HALL…VSRD) and 473 to 506 (ADCF…EPNI). The interval 924-953 (RVSGDEPDECSQEEAPKASISGSMSQPVLV) is disordered. Polar residues predominate over residues 943–953 (ISGSMSQPVLV).

It localises to the nucleus. It is found in the chromosome. In terms of biological role, required for crossover formation, complete synapsis of homologous chromosomes and bivalent formation during meiosis. Is specific to recombination events resulting in interference-sensitive crossovers (class I meiotic crossover) and works cooperatively with MER3 to promote crossovers. This is TPR repeat-containing protein ZIP4 from Oryza sativa subsp. indica (Rice).